The chain runs to 118 residues: Large ribosomal subunit protein bL17 (118 aa).

Belongs to the bacterial ribosomal protein bL17 family. In terms of assembly, part of the 50S ribosomal subunit. Contacts protein L32.

The polypeptide is Large ribosomal subunit protein bL17 (Hydrogenobaculum sp. (strain Y04AAS1)).